The following is a 165-amino-acid chain: Anaerobic nitrite reductase GLB1 (165 aa).

A Globin domain is found at 12 to 162 (VFGEEQEALV…LVAAIKREMK (151 aa)). The Homodimerization signature appears at 45–49 (EIAPS). Residues Ser-55, Lys-69, His-73, Arg-103, Thr-107, and His-108 each contribute to the heme b site. A Homodimerization motif is present at residues 115–127 (DGHFEVTGFALLE).

The protein belongs to the plant globin family. As to quaternary structure, homodimer. It depends on heme b as a cofactor. In terms of tissue distribution, in embryonic organs and at low levels in vegetative organs.

It localises to the cytoplasm. The protein localises to the nucleus. The catalysed reaction is Fe(III)-heme b-[protein] + nitric oxide + H2O = Fe(II)-heme b-[protein] + nitrite + 2 H(+). Phytoglobin that reduces nitrite to nitric oxide (NO) under anoxic conditions (e.g. during flooding or in waterlogged soil). May not function as an oxygen storage or transport protein. Has an unusually high affinity for O(2) through an hexacoordinate heme iron because of a very low dissociation constant. This Zea mays (Maize) protein is Anaerobic nitrite reductase GLB1 (HB).